Here is a 626-residue protein sequence, read N- to C-terminus: DNA (cytosine-5)-methyltransferase DRM2 (626 aa).

UBA domains follow at residues 59-101 (GFSD…ISKY) and 109-150 (SSKS…LLSC). The segment covering 160–187 (VEEEDGIDWSSSDDDTNYTDMLNSDDEK) has biased composition (acidic residues). Disordered regions lie at residues 160–196 (VEEE…ENGS) and 245–282 (TEHE…PNPM). The region spanning 190 to 232 (NSNENGSKIRSLVKMGFSELEASLAVERCGENVDIAELTDFLC) is the UBA 3 domain. Basic and acidic residues predominate over residues 262–276 (ESKGEPRSSVDDEPI). The SAM-dependent MTase DRM-type domain occupies 295-626 (THRSLPELAR…EVVRARMRGS (332 aa)).

The protein belongs to the class I-like SAM-binding methyltransferase superfamily. DRM-methyltransferase family. As to quaternary structure, interacts with RDM1. As to expression, expressed in roots, inflorescences and at lower levels in leaves.

Its subcellular location is the nucleus. It localises to the nucleoplasm. It catalyses the reaction a 2'-deoxycytidine in DNA + S-adenosyl-L-methionine = a 5-methyl-2'-deoxycytidine in DNA + S-adenosyl-L-homocysteine + H(+). Its function is as follows. Involved in de novo DNA methylation. Controls asymmetric and CpNpG methylation. Required for FWA gene silencing but not for the maintenance of SUP gene silencing. Functionally redundant to CMT3 to maintain non-CpG methylation. Involved in RNA-directed DNA methylation (RdDM). Acts as major DNA methyltransferase in the RdDM pathway, and is essential for RNA-directed de novo DNA methylation of cytosines in all sequence contexts. Associates with long non-coding RNA (lncRNA) produced by RNA polymerase V (Pol V). This association is dependent on AGO4 and IDN2, and results in DNA methylation of RdDM target loci. The polypeptide is DNA (cytosine-5)-methyltransferase DRM2 (DRM2) (Arabidopsis thaliana (Mouse-ear cress)).